A 427-amino-acid polypeptide reads, in one-letter code: Mucorpepsin (427 aa).

A signal peptide spans methionine 1 to alanine 22. Residues arginine 23–phenylalanine 66 constitute a propeptide, activation peptide. The region spanning tyrosine 86 to alanine 418 is the Peptidase A1 domain. Aspartate 104 is a catalytic residue. Cysteine 117 and cysteine 123 form a disulfide bridge. An N-linked (GlcNAc...) asparagine glycan is attached at asparagine 254. Aspartate 303 is an active-site residue. A disulfide bridge links cysteine 338 with cysteine 382.

It belongs to the peptidase A1 family.

The enzyme catalyses Hydrolysis of proteins, favoring hydrophobic residues at P1 and P1'. Clots milk. Does not accept Lys at P1, and hence does not activate trypsinogen.. Functionally, this enzyme, capable of clotting milk is frequently used for cheese production. The chain is Mucorpepsin from Rhizomucor pusillus.